Reading from the N-terminus, the 127-residue chain is Small ribosomal subunit protein uS11 (127 aa).

This sequence belongs to the universal ribosomal protein uS11 family. Part of the 30S ribosomal subunit. Interacts with proteins S7 and S18. Binds to IF-3.

Its function is as follows. Located on the platform of the 30S subunit, it bridges several disparate RNA helices of the 16S rRNA. Forms part of the Shine-Dalgarno cleft in the 70S ribosome. The chain is Small ribosomal subunit protein uS11 from Chlorobium luteolum (strain DSM 273 / BCRC 81028 / 2530) (Pelodictyon luteolum).